A 246-amino-acid chain; its full sequence is Probable transcriptional regulatory protein RB5500 (246 aa).

The protein belongs to the TACO1 family.

Its subcellular location is the cytoplasm. The chain is Probable transcriptional regulatory protein RB5500 from Rhodopirellula baltica (strain DSM 10527 / NCIMB 13988 / SH1).